The chain runs to 130 residues: Small ribosomal subunit protein uS9 (130 aa).

It belongs to the universal ribosomal protein uS9 family.

The protein is Small ribosomal subunit protein uS9 of Histophilus somni (strain 129Pt) (Haemophilus somnus).